We begin with the raw amino-acid sequence, 608 residues long: Dihydroxy-acid dehydratase, chloroplastic (608 aa).

Residues 1-34 constitute a chloroplast transit peptide; sequence MQATIFSPRATLFPCKPLLPSHNVNSRRPSIISC. Position 35 is an N-acetylserine (serine 35). A [2Fe-2S] cluster-binding site is contributed by cysteine 100. Aspartate 132 serves as a coordination point for Mg(2+). Position 173 (cysteine 173) interacts with [2Fe-2S] cluster. Aspartate 174 is a Mg(2+) binding site. Cysteine 245 serves as a coordination point for [2Fe-2S] cluster. Residue glutamate 497 coordinates Mg(2+). Serine 523 acts as the Proton acceptor in catalysis.

This sequence belongs to the IlvD/Edd family. The cofactor is [2Fe-2S] cluster. Requires Mg(2+) as cofactor.

The protein localises to the plastid. Its subcellular location is the chloroplast. It carries out the reaction (2R)-2,3-dihydroxy-3-methylbutanoate = 3-methyl-2-oxobutanoate + H2O. The enzyme catalyses (2R,3R)-2,3-dihydroxy-3-methylpentanoate = (S)-3-methyl-2-oxopentanoate + H2O. The protein operates within amino-acid biosynthesis; L-isoleucine biosynthesis; L-isoleucine from 2-oxobutanoate: step 3/4. It participates in amino-acid biosynthesis; L-valine biosynthesis; L-valine from pyruvate: step 3/4. Is highly competitively inhibited by the fungal sesquiterpenoid aspterric acid, which is effective as a herbicide in spray applications. Functionally, functions in the biosynthesis of branched-chain amino acids. Catalyzes the dehydration of (2R,3R)-2,3-dihydroxy-3-methylpentanoate (2,3-dihydroxy-3-methylvalerate) into 2-oxo-3-methylpentanoate (2-oxo-3-methylvalerate) and of (2R)-2,3-dihydroxy-3-methylbutanoate (2,3-dihydroxyisovalerate) into 2-oxo-3-methylbutanoate (2-oxoisovalerate), the penultimate precursor to L-isoleucine and L-valine, respectively. This chain is Dihydroxy-acid dehydratase, chloroplastic, found in Arabidopsis thaliana (Mouse-ear cress).